The chain runs to 144 residues: Large ribosomal subunit protein uL15 (144 aa).

Residues M1 to G53 form a disordered region. Residues R21–S31 are compositionally biased toward gly residues.

It belongs to the universal ribosomal protein uL15 family. Part of the 50S ribosomal subunit.

Binds to the 23S rRNA. The chain is Large ribosomal subunit protein uL15 from Histophilus somni (strain 129Pt) (Haemophilus somnus).